We begin with the raw amino-acid sequence, 885 residues long: Alanine--tRNA ligase (885 aa).

The Zn(2+) site is built by histidine 564, histidine 568, cysteine 676, and histidine 680.

This sequence belongs to the class-II aminoacyl-tRNA synthetase family. It depends on Zn(2+) as a cofactor.

The protein localises to the cytoplasm. It carries out the reaction tRNA(Ala) + L-alanine + ATP = L-alanyl-tRNA(Ala) + AMP + diphosphate. In terms of biological role, catalyzes the attachment of alanine to tRNA(Ala) in a two-step reaction: alanine is first activated by ATP to form Ala-AMP and then transferred to the acceptor end of tRNA(Ala). Also edits incorrectly charged Ser-tRNA(Ala) and Gly-tRNA(Ala) via its editing domain. The polypeptide is Alanine--tRNA ligase (Brucella anthropi (strain ATCC 49188 / DSM 6882 / CCUG 24695 / JCM 21032 / LMG 3331 / NBRC 15819 / NCTC 12168 / Alc 37) (Ochrobactrum anthropi)).